Reading from the N-terminus, the 45-residue chain is Photosystem II reaction center protein K (45 aa).

Positions 1–8 (MTQIFLIG) are excised as a propeptide. Residues 20-40 (IVDVLPIIPVLFLLLAFVWQA) traverse the membrane as a helical segment.

It belongs to the PsbK family. In terms of assembly, PSII is composed of 1 copy each of membrane proteins PsbA, PsbB, PsbC, PsbD, PsbE, PsbF, PsbH, PsbI, PsbJ, PsbK, PsbL, PsbM, PsbT, PsbX, PsbY, PsbZ, Psb30/Ycf12, at least 3 peripheral proteins of the oxygen-evolving complex and a large number of cofactors. It forms dimeric complexes.

Its subcellular location is the plastid. The protein localises to the chloroplast thylakoid membrane. Its function is as follows. One of the components of the core complex of photosystem II (PSII). PSII is a light-driven water:plastoquinone oxidoreductase that uses light energy to abstract electrons from H(2)O, generating O(2) and a proton gradient subsequently used for ATP formation. It consists of a core antenna complex that captures photons, and an electron transfer chain that converts photonic excitation into a charge separation. This is Photosystem II reaction center protein K from Ostreococcus tauri.